Here is a 143-residue protein sequence, read N- to C-terminus: Putative aryl-alcohol dehydrogenase AAD15 (143 aa).

This sequence belongs to the aldo/keto reductase family. Aldo/keto reductase 2 subfamily.

Putative aryl-alcohol dehydrogenase. The polypeptide is Putative aryl-alcohol dehydrogenase AAD15 (AAD15) (Saccharomyces cerevisiae (strain ATCC 204508 / S288c) (Baker's yeast)).